The primary structure comprises 255 residues: 4-hydroxy-tetrahydrodipicolinate reductase (255 aa).

Residues 9 to 14, 89 to 91, and 115 to 118 contribute to the NAD(+) site; these read GFKGKM, GTT, and APNF. His-145 serves as the catalytic Proton donor/acceptor. His-146 contacts (S)-2,3,4,5-tetrahydrodipicolinate. Lys-149 acts as the Proton donor in catalysis. 155 to 156 contacts (S)-2,3,4,5-tetrahydrodipicolinate; it reads GT.

Belongs to the DapB family.

The protein resides in the cytoplasm. The enzyme catalyses (S)-2,3,4,5-tetrahydrodipicolinate + NAD(+) + H2O = (2S,4S)-4-hydroxy-2,3,4,5-tetrahydrodipicolinate + NADH + H(+). The catalysed reaction is (S)-2,3,4,5-tetrahydrodipicolinate + NADP(+) + H2O = (2S,4S)-4-hydroxy-2,3,4,5-tetrahydrodipicolinate + NADPH + H(+). The protein operates within amino-acid biosynthesis; L-lysine biosynthesis via DAP pathway; (S)-tetrahydrodipicolinate from L-aspartate: step 4/4. Functionally, catalyzes the conversion of 4-hydroxy-tetrahydrodipicolinate (HTPA) to tetrahydrodipicolinate. The polypeptide is 4-hydroxy-tetrahydrodipicolinate reductase (Streptococcus sanguinis (strain SK36)).